Consider the following 473-residue polypeptide: MSMKISEKKFNDRVGDGIQDSFMRGAVSSAQTRLYTNRLKAADELGNWEEWRELGEEIRQHTLENLDYYLMQLSENVSKRGGHVYFAKTKEEAAKYIQDVAKKKQAKKVVKSKSMVTEEISMNHALEEIGCEVLESDLGEYILQVDNDPPSHIIAPALHKNRTQIRDVFKEKLGYENSDDPYEMTKFVRKQLREKFMDAEIGVTGCNFAVANTGSLCLVTNEGNADLVMSIPKTQIAVMGMERMVPTMEELDVLVGLLCRSAVGQKLTSYVTVAGPIQEEEVDGPEEFHLVVVDNGRSQILGSEFRQVLQCIRCAACVNVCPVYRHVGGHSYGSIYSGPIGAVLTPLLGGYDDYKELPYASSLCGACTEACPVKIPLHDLLLKHRQVIVEQEGRAPLAEKLAMKMFSMGASSAALYKMGSKMAPAAMSPFTSGNRVSKGVGPLKNWTDIREFPAPSKERFRDWYKDHKKGGDK.

4Fe-4S ferredoxin-type domains follow at residues 302-332 (GSEF…GHSY) and 351-380 (YDDY…LHDL). 7 residues coordinate [4Fe-4S] cluster: Cys311, Cys314, Cys317, Cys321, Cys364, Cys367, and Cys371.

Belongs to the LutB/YkgF family.

Its function is as follows. Is involved in L-lactate degradation and allows cells to grow with lactate as the sole carbon source. Has probably a role as an electron transporter during oxidation of L-lactate. The polypeptide is Lactate utilization protein B (Bacillus anthracis (strain A0248)).